Reading from the N-terminus, the 242-residue chain is MSNDYYLIIPAGGIGTRMHSEKDNINRKIKIAKQYLKLDNGLTILDQTLKILLNIDQIKGCIIALANKDYLFTKSKFNNHSKLITTVIGGKKRMNSVFNGLKALTNLAKDDDWILVHDSVRPCVKASEIINLMNQLKHHETGGLLATKVVDTIKQASNNIVNTTIDRSNLWQAQTPQMYRFGVLLKALNTVINDGMNITDEASAIEYLRLKSVLVKSSKSNIKITNSEDLELANFYLTQYKE.

It belongs to the IspD/TarI cytidylyltransferase family. IspD subfamily.

The enzyme catalyses 2-C-methyl-D-erythritol 4-phosphate + CTP + H(+) = 4-CDP-2-C-methyl-D-erythritol + diphosphate. The protein operates within isoprenoid biosynthesis; isopentenyl diphosphate biosynthesis via DXP pathway; isopentenyl diphosphate from 1-deoxy-D-xylulose 5-phosphate: step 2/6. In terms of biological role, catalyzes the formation of 4-diphosphocytidyl-2-C-methyl-D-erythritol from CTP and 2-C-methyl-D-erythritol 4-phosphate (MEP). The chain is 2-C-methyl-D-erythritol 4-phosphate cytidylyltransferase from Vesicomyosocius okutanii subsp. Calyptogena okutanii (strain HA).